We begin with the raw amino-acid sequence, 164 residues long: Transcription factor E (164 aa).

Residues 5 to 87 (NDKVIRGYLR…LWHLDFSDIE (83 aa)) enclose the HTH TFE/IIEalpha-type domain.

The protein belongs to the TFE family. As to quaternary structure, monomer. Interaction with RNA polymerase subunits RpoF and RpoE is necessary for Tfe stimulatory transcription activity. Able to interact with Tbp and RNA polymerase in the absence of DNA promoter. Interacts both with the preinitiation and elongation complexes.

Functionally, transcription factor that plays a role in the activation of archaeal genes transcribed by RNA polymerase. Facilitates transcription initiation by enhancing TATA-box recognition by TATA-box-binding protein (Tbp), and transcription factor B (Tfb) and RNA polymerase recruitment. Not absolutely required for transcription in vitro, but particularly important in cases where Tbp or Tfb function is not optimal. It dynamically alters the nucleic acid-binding properties of RNA polymerases by stabilizing the initiation complex and destabilizing elongation complexes. Seems to translocate with the RNA polymerase following initiation and acts by binding to the non template strand of the transcription bubble in elongation complexes. This Methanosarcina mazei (strain ATCC BAA-159 / DSM 3647 / Goe1 / Go1 / JCM 11833 / OCM 88) (Methanosarcina frisia) protein is Transcription factor E.